The following is a 463-amino-acid chain: Glutamate--tRNA ligase 2 (463 aa).

The 'HIGH' region signature appears at 11–21 (PSPTGYLHIGG). Positions 240–244 (KLSKR) match the 'KMSKS' region motif. An ATP-binding site is contributed by Lys-243.

It belongs to the class-I aminoacyl-tRNA synthetase family. Glutamate--tRNA ligase type 1 subfamily. In terms of assembly, monomer.

Its subcellular location is the cytoplasm. It catalyses the reaction tRNA(Glu) + L-glutamate + ATP = L-glutamyl-tRNA(Glu) + AMP + diphosphate. Catalyzes the attachment of glutamate to tRNA(Glu) in a two-step reaction: glutamate is first activated by ATP to form Glu-AMP and then transferred to the acceptor end of tRNA(Glu). This chain is Glutamate--tRNA ligase 2, found in Campylobacter jejuni (strain RM1221).